Reading from the N-terminus, the 311-residue chain is Urease accessory protein UreD (311 aa).

This sequence belongs to the UreD family. As to quaternary structure, ureD, UreF and UreG form a complex that acts as a GTP-hydrolysis-dependent molecular chaperone, activating the urease apoprotein by helping to assemble the nickel containing metallocenter of UreC. The UreE protein probably delivers the nickel.

Its subcellular location is the cytoplasm. Functionally, required for maturation of urease via the functional incorporation of the urease nickel metallocenter. The sequence is that of Urease accessory protein UreD from Synechococcus sp. (strain CC9605).